The chain runs to 333 residues: Beta-ketoacyl-[acyl-carrier-protein] synthase III (333 aa).

Catalysis depends on residues Cys116 and His258. Residues 259–263 (QANQR) are ACP-binding. Asn288 is a catalytic residue.

The protein belongs to the thiolase-like superfamily. FabH family. As to quaternary structure, homodimer.

It is found in the cytoplasm. It carries out the reaction malonyl-[ACP] + acetyl-CoA + H(+) = 3-oxobutanoyl-[ACP] + CO2 + CoA. The protein operates within lipid metabolism; fatty acid biosynthesis. Catalyzes the condensation reaction of fatty acid synthesis by the addition to an acyl acceptor of two carbons from malonyl-ACP. Catalyzes the first condensation reaction which initiates fatty acid synthesis and may therefore play a role in governing the total rate of fatty acid production. Possesses both acetoacetyl-ACP synthase and acetyl transacylase activities. Its substrate specificity determines the biosynthesis of branched-chain and/or straight-chain of fatty acids. The polypeptide is Beta-ketoacyl-[acyl-carrier-protein] synthase III (Microcystis aeruginosa (strain NIES-843 / IAM M-2473)).